The primary structure comprises 30 residues: Conotoxin CcTx (30 aa).

P2 carries the 4-hydroxyproline modification. An O-linked (HexNAc...) serine glycan is attached at S7. 3 disulfides stabilise this stretch: C12–C21, C13–C26, and C24–C30. 4-hydroxyproline occurs at positions 17 and 22.

O-glycosylated at Ser-7 by a core type 9 glycan, containing both D- and L-galactose units (alpha-L-Galp-(1-&gt;4)-alpha-D- GlcpNAc-(1-&gt;6)-[alpha-L-Galp-(1-&gt;2)-bets-D-Galp-(1-&gt;3)-]alpha-D-GalpNAc-(1-&gt;O)). Expressed by the venom duct.

Its subcellular location is the secreted. May specifically activate neuronal voltage-gated sodium channels (Nav) at the resting membrane potential. Causes a marked contraction and extension of the caudal and dorsal fins in fish and noticeable spontaneous contractions of isolated frog neuromuscular preparations. This chain is Conotoxin CcTx, found in Conus consors (Singed cone).